A 61-amino-acid chain; its full sequence is Small ribosomal subunit protein uS14 (61 aa).

Zn(2+) contacts are provided by C24, C27, C40, and C43.

The protein belongs to the universal ribosomal protein uS14 family. Zinc-binding uS14 subfamily. In terms of assembly, part of the 30S ribosomal subunit. Contacts proteins S3 and S10. Zn(2+) is required as a cofactor.

Functionally, binds 16S rRNA, required for the assembly of 30S particles and may also be responsible for determining the conformation of the 16S rRNA at the A site. This is Small ribosomal subunit protein uS14 from Pelobacter propionicus (strain DSM 2379 / NBRC 103807 / OttBd1).